The sequence spans 184 residues: Protein Syd (184 aa).

It belongs to the Syd family.

It is found in the cell inner membrane. Its function is as follows. Interacts with the SecY protein in vivo. May bind preferentially to an uncomplexed state of SecY, thus functioning either as a chelating agent for excess SecY in the cell or as a regulatory factor that negatively controls the translocase function. The protein is Protein Syd of Photobacterium profundum (strain SS9).